The primary structure comprises 305 residues: DNA-directed RNA polymerase 35 kDa subunit (305 aa).

It belongs to the poxviridae DNA-directed RNA polymerase 35 kDa subunit family. As to quaternary structure, the DNA-dependent RNA polymerase used for intermediate and late genes expression consists of eight subunits 147 kDa, 133 kDa, 35 kDa, 30 kDa, 22 kDa, 19 kDa, 18 kDa and 7 kDa totalling more than 500 kDa in mass. The same holoenzyme, with the addition of the transcription-specificity factor RAP94, is used for early gene expression.

It is found in the virion. It catalyses the reaction RNA(n) + a ribonucleoside 5'-triphosphate = RNA(n+1) + diphosphate. In terms of biological role, part of the DNA-dependent RNA polymerase which catalyzes the transcription of viral DNA into RNA using the four ribonucleoside triphosphates as substrates. Responsible for the transcription of early, intermediate and late genes. DNA-dependent RNA polymerase associates with the early transcription factor (ETF) thereby allowing the early genes transcription. Late transcription, and probably also intermediate transcription, require newly synthesized RNA polymerase. The protein is DNA-directed RNA polymerase 35 kDa subunit (RPO35) of Rabbitpox virus (strain Utrecht) (RPV).